A 108-amino-acid chain; its full sequence is Glutaredoxin-1 (108 aa).

Residues 3–106 (EEFVQQRLAN…DILSSIGVLR (104 aa)) form the Glutaredoxin domain. Cys23 and Cys26 form a disulfide bridge.

This sequence belongs to the glutaredoxin family.

The protein localises to the virion. Its function is as follows. Has thioltransferase and dehydroascorbate reductase activities. The sequence is that of Glutaredoxin-1 (OPG075) from Ectromelia virus (strain Moscow) (ECTV).